We begin with the raw amino-acid sequence, 142 residues long: Hemoglobin subunit zeta (142 aa).

Residue Ser-2 is modified to N-acetylserine. The Globin domain occupies 2–142 (SLTKTERTII…VSSVLTEKYR (141 aa)). Thr-29 carries the phosphothreonine modification. A Phosphoserine modification is found at Ser-53. His-59 is a heme b binding site. 2 positions are modified to phosphoserine: Ser-73 and Ser-82. Residue His-88 coordinates heme b.

This sequence belongs to the globin family. Heterotetramer of two zeta chains and two epsilon chains in early embryonic hemoglobin Gower-1; two zeta chains and two gamma chains in fetal hemoglobin Portland-1. Heterotetramer of two zeta chains and two beta chains in hemoglobin Portland-2, detected in fetuses and neonates with homozygous alpha-thalassemia. In terms of tissue distribution, detected in fetal erythrocytes (at protein level).

In terms of biological role, the zeta chain is an alpha-type chain of mammalian embryonic hemoglobin. The polypeptide is Hemoglobin subunit zeta (HBZ) (Homo sapiens (Human)).